A 150-amino-acid chain; its full sequence is MAKKSVRHIKIREIISTEQVETQDELVRRLNQFDLNVTQATVSRDIKELQLIKVPAPTGQYIYSLPNDRKYHPLEKLGRYLMDSFVNIEGTGNLLVLKTLPGNAQSIGAILDQIDWEEVLGTICGDDTCLLICHDEESANAIKTRIFNLL.

This sequence belongs to the ArgR family.

It localises to the cytoplasm. It functions in the pathway amino-acid biosynthesis; L-arginine biosynthesis [regulation]. Functionally, regulates arginine biosynthesis genes. This is Arginine repressor from Staphylococcus carnosus (strain TM300).